Consider the following 268-residue polypeptide: Ubiquinone biosynthesis protein COQ4 homolog 1, mitochondrial (268 aa).

A compositionally biased stretch (basic residues) spans 1–10 (MFLRRVHPVR). The N-terminal 18 residues, 1–18 (MFLRRVHPVRLGHASQRS), are a transit peptide targeting the mitochondrion. The disordered stretch occupies residues 1-44 (MFLRRVHPVRLGHASQRSLTTTKSRNESTTTTVEAPQAAPSPPP). Residues 20-38 (TTTKSRNESTTTTVEAPQA) are compositionally biased toward low complexity. Positions 177, 178, 181, and 193 each coordinate Zn(2+).

The protein belongs to the COQ4 family. Component of a multi-subunit COQ enzyme complex. Zn(2+) is required as a cofactor.

The protein localises to the mitochondrion inner membrane. The enzyme catalyses a 4-hydroxy-3-methoxy-5-(all-trans-polyprenyl)benzoate + H(+) = a 2-methoxy-6-(all-trans-polyprenyl)phenol + CO2. It functions in the pathway cofactor biosynthesis; ubiquinone biosynthesis. In terms of biological role, lyase that catalyzes the C1-decarboxylation of 4-hydroxy-3-methoxy-5-(all-trans-polyprenyl)benzoic acid into 2-methoxy-6-(all-trans-polyprenyl)phenol during ubiquinone biosynthesis. The polypeptide is Ubiquinone biosynthesis protein COQ4 homolog 1, mitochondrial (Culex quinquefasciatus (Southern house mosquito)).